Reading from the N-terminus, the 233-residue chain is MPKHGKRYRALEGKVDRNKQYSIDEAAALVKELATAKFDETVEVHFRLGIDPRKSDQNVRGTVALPHGTGRSVRVAVITKGENVQAAEAAGADVVGSDELIERIAGGFMDFDAVVATPDMMAQIGQKLARLLGPRGLLPNPKSGTVGADVAGMVRGLKAGRIEFRNDKTGVVHAPIGKASFESGNLSANYQALISALEGAKPGTAKGVFLRSAYLTTTMGPSIPLALGGAALA.

Belongs to the universal ribosomal protein uL1 family. As to quaternary structure, part of the 50S ribosomal subunit.

Functionally, binds directly to 23S rRNA. Forms the L1 stalk. Unlike the case in the Thermus thermophilus 70S ribosome, this protein is not seen to block the exit path of the E site tRNA. It is clear that the protein in the structure is flexible however, so this is probably due to its position in these crystals. Protein L1 is also a translational repressor protein, it controls the translation of the L11 operon by binding to its mRNA. The sequence is that of Large ribosomal subunit protein uL1 (rplA) from Deinococcus radiodurans (strain ATCC 13939 / DSM 20539 / JCM 16871 / CCUG 27074 / LMG 4051 / NBRC 15346 / NCIMB 9279 / VKM B-1422 / R1).